The chain runs to 399 residues: Elongation factor Tu (399 aa).

Positions 10–209 (KPHVNIGTIG…AVDSYIPTPV (200 aa)) constitute a tr-type G domain. The segment at 19-26 (GHVDHGKT) is G1. 19–26 (GHVDHGKT) is a GTP binding site. Residue Thr26 coordinates Mg(2+). The tract at residues 60-64 (GITIA) is G2. Positions 81–84 (DCPG) are G3. Residues 81-85 (DCPGH) and 136-139 (NKAD) each bind GTP. Residues 136-139 (NKAD) are G4. Residues 174 to 176 (SAL) form a G5 region.

Belongs to the TRAFAC class translation factor GTPase superfamily. Classic translation factor GTPase family. EF-Tu/EF-1A subfamily. In terms of assembly, monomer.

It localises to the cytoplasm. The enzyme catalyses GTP + H2O = GDP + phosphate + H(+). GTP hydrolase that promotes the GTP-dependent binding of aminoacyl-tRNA to the A-site of ribosomes during protein biosynthesis. The chain is Elongation factor Tu from Campylobacter fetus subsp. fetus (strain 82-40).